We begin with the raw amino-acid sequence, 122 residues long: Large ribosomal subunit protein uL14 (122 aa).

It belongs to the universal ribosomal protein uL14 family. Part of the 50S ribosomal subunit. Forms a cluster with proteins L3 and L19. In the 70S ribosome, L14 and L19 interact and together make contacts with the 16S rRNA in bridges B5 and B8.

Its function is as follows. Binds to 23S rRNA. Forms part of two intersubunit bridges in the 70S ribosome. This chain is Large ribosomal subunit protein uL14, found in Nocardioides sp. (strain ATCC BAA-499 / JS614).